Consider the following 740-residue polypeptide: MSSAVRIVEKQLDEILAIAKNPAQIRNAGTLAHVDHGKTTTSDSLLMGAGLLSPKVAGKALAMDYVPIEQLRQMTVKAANISLYFEYGGKPYLINFVDTPGHVDFTGHVTRSLRVMDGGLVVVDAVEGVMTQTETVVRQALEEYVRPVLFINKIDRLIKELRLSPQEIQQRILTIVKDFNALIDMFAPPEFKDKWKIDPGKGQMALGSALHKWGITIPMAQKAGIKFSNIVDAYEKGYVDQLAQEFPLYKTILSMIIEHIPPPNVAQKYRIPRLWRGELNSEVGKALLEADPNGPTVIAVSKVNKDPHAGLIATGRVFSGTIREGDEVYIIGRRLKKKVLQTYIYMGPSRIIVPYMPAGNIVALMGVDEARAGDTLVDPKFSEIPPFEKMRYISEPVVTVAIEPKNPAELARLVEALKDLVVEDPTLDLKIDQETGQILLSGVGTLHLEIATWLLKERTKTEFTVSPPLIRFRETVRERSQVWEGKSPNKHNRLYFYVEPLDETTIELIASREITEDQEPRERAKILREKAGWDTDEARGIWAIDDRYFNVIVDKTSGIQYLREIRDYIVQGFRWSMEAGPLAQEPMRGVKVVLVDAVVHEDPAHRGPAQIMPATKNAIFAAVLSARPTLLEPLMRLDIKVAPDYIGAVTSVLNKHRGKILDMTQQEYMAFLRAELPVLESFNISDELRAAAAGKIFWSMQFARWAPFPESMLGDFVKQLRKKKGLKEEIPKPTDFVEVY.

Positions 23–264 (AQIRNAGTLA…MIIEHIPPPN (242 aa)) constitute a tr-type G domain. Residues 32–39 (AHVDHGKT), 98–102 (DTPGH), and 152–155 (NKID) contribute to the GTP site. H605 is subject to Diphthamide.

This sequence belongs to the TRAFAC class translation factor GTPase superfamily. Classic translation factor GTPase family. EF-G/EF-2 subfamily.

It localises to the cytoplasm. Functionally, catalyzes the GTP-dependent ribosomal translocation step during translation elongation. During this step, the ribosome changes from the pre-translocational (PRE) to the post-translocational (POST) state as the newly formed A-site-bound peptidyl-tRNA and P-site-bound deacylated tRNA move to the P and E sites, respectively. Catalyzes the coordinated movement of the two tRNA molecules, the mRNA and conformational changes in the ribosome. The protein is Elongation factor 2 of Pyrobaculum aerophilum (strain ATCC 51768 / DSM 7523 / JCM 9630 / CIP 104966 / NBRC 100827 / IM2).